The following is a 30-amino-acid chain: NADH-ubiquinone oxidoreductase 18 kDa subunit (30 aa).

Complex I is composed of about 45 different subunits.

Its subcellular location is the mitochondrion inner membrane. It carries out the reaction a ubiquinone + NADH + 5 H(+)(in) = a ubiquinol + NAD(+) + 4 H(+)(out). Transfer of electrons from NADH to the respiratory chain. The immediate electron acceptor for the enzyme is believed to be ubiquinone. The sequence is that of NADH-ubiquinone oxidoreductase 18 kDa subunit from Solanum tuberosum (Potato).